Consider the following 125-residue polypeptide: Fumarate reductase subunit D (125 aa).

The next 3 helical transmembrane spans lie at 30–50 (FAMI…MGVI), 60–80 (VVSF…LALP), and 105–125 (IACY…IFML).

It belongs to the FrdD family. In terms of assembly, part of an enzyme complex containing four subunits: a flavoprotein (FrdA), an iron-sulfur protein (FrdB), and two hydrophobic anchor proteins (FrdC and FrdD).

It is found in the cell inner membrane. Functionally, anchors the catalytic components of the fumarate reductase complex to the cell membrane, binds quinones. The polypeptide is Fumarate reductase subunit D (Vibrio vulnificus (strain YJ016)).